Consider the following 408-residue polypeptide: Putative gustatory receptor 98c (408 aa).

Residues 1 to 42 (MEMEAKRSRLLTTARPYLQVLSLFGLTPPAEFFTRTLRKRRR) lie on the Cytoplasmic side of the membrane. Residues 43-63 (FCWMAGYSLYLIAILLMVFYE) traverse the membrane as a helical segment. Residues 64–92 (FHANIVSLHLEIYKFHVEDFSKVMGRTQK) lie on the Extracellular side of the membrane. The helical transmembrane segment at 93–113 (FLIVAIATCNQLNILLNYGRL) threads the bilayer. The Cytoplasmic segment spans residues 114–146 (GLIYDEIANLDLGIDKSSKNFCGKSHWWSFRLR). A helical transmembrane segment spans residues 147–167 (LTLSIGLWMVIIIGVIPRLTL). The Extracellular portion of the chain corresponds to 168 to 183 (GRAGPFFHWVNQVLTQ). Residues 184 to 204 (IILIMLQLKGPEYCLFVLLVY) form a helical membrane-spanning segment. The Cytoplasmic segment spans residues 205 to 261 (ELILRTRHVLEQLKDDLEDFDCGARIQELCVTLKQNQLLIGRIWRLVDEIGAYFRWS). Residues 262–282 (MTLLFLYNGLTILHVVNWAII) form a helical membrane-spanning segment. Residues 283–296 (RSIDPNDCCQLNRL) are Extracellular-facing. Residues 297 to 317 (GSITFLSFNLLLTCFFSECCV) traverse the membrane as a helical segment. The Cytoplasmic segment spans residues 318–367 (KTYNSISYILHQIGCLPTAEEFQMLKMGLKEYILQMQHLKLLFTCGGLFD). The chain crosses the membrane as a helical span at residues 368-388 (INIKLFGGMLVTLCGYVIIIV). The Extracellular portion of the chain corresponds to 389–408 (QFKIQDFALIGYRQNTSDTS). The N-linked (GlcNAc...) asparagine glycan is linked to Asn-403.

Belongs to the insect chemoreceptor superfamily. Gustatory receptor (GR) family. Gr2a subfamily.

It localises to the cell membrane. Probable gustatory receptor which mediates acceptance or avoidance behavior, depending on its substrates. The protein is Putative gustatory receptor 98c (Gr98c) of Drosophila melanogaster (Fruit fly).